The chain runs to 109 residues: Large ribosomal subunit protein bL31B (109 aa).

The interval 79–109 (NVRQPAQQPQPEEDALPAAKGKKKVVTKKKK) is disordered. Basic residues predominate over residues 98 to 109 (KGKKKVVTKKKK).

The protein belongs to the bacterial ribosomal protein bL31 family. Type B subfamily. Part of the 50S ribosomal subunit.

The polypeptide is Large ribosomal subunit protein bL31B (Chlamydia pneumoniae (Chlamydophila pneumoniae)).